Consider the following 504-residue polypeptide: Sodium/proline symporter (504 aa).

13 consecutive transmembrane segments (helical) span residues 8-28, 50-70, 73-93, 127-147, 163-183, 189-209, 240-260, 281-301, 324-344, 374-394, 405-425, 434-454, and 461-481; these read LITF…AYYY, SAGA…AVYL, LVEG…WLLV, LVSA…GVVA, ALWY…FLAV, IQAT…LLSF, LGLL…HILA, WMVL…PYFF, LLFN…AVMS, ELVW…IWIA, VEFA…FSLF, AMAG…VVPA, and VYEM…ISLL.

The protein belongs to the sodium:solute symporter (SSF) (TC 2.A.21) family.

Its subcellular location is the cell inner membrane. It catalyses the reaction L-proline(in) + Na(+)(in) = L-proline(out) + Na(+)(out). In terms of biological role, catalyzes the sodium-dependent uptake of extracellular L-proline. The chain is Sodium/proline symporter (putP) from Haemophilus influenzae (strain ATCC 51907 / DSM 11121 / KW20 / Rd).